Consider the following 97-residue polypeptide: YcgL domain-containing protein PMI1171 (97 aa).

Residues 3–87 (MICAIYRSTK…PVESMLNAYL (85 aa)) enclose the YcgL domain.

The chain is YcgL domain-containing protein PMI1171 from Proteus mirabilis (strain HI4320).